Here is a 597-residue protein sequence, read N- to C-terminus: MKHIRNFSIIAHIDHGKSTLSDRLIQVCGGLSDREMAEQVLDSMDLERERGITIKAQSVTLDYTAKDGQTYQLNFIDTPGHVDFAYEVSRSLAACEGALLVVDAGQGVEAQTLANCYTAIEMDLEVVPILNKIDLPAAEPERVAEEIEDIVGIDAIDAVRCSAKTGVGVDEVLEKIVSAIPAPQGDPDAPLQALIIDSWFDNYLGVVSLVRIKNGSLKKNDKIKVMSTGQTWGVDRLGIFTPKQVDTDSLDTGEVGWVVCGIKDIMGAPVGDTLTLAKNGCEKALPGFKKVKPQVYAGLFPVSSDDYDNFRDALGKLSLNDASLFYEPETSAALGFGFRCGFLGMLHMEIIQERLEREYDLDLITTAPTVVYEVLKTNKEIVYVDSPAKLPAINDIEEIREPIARCNILVPADYLGNVITLCIEKRGTQVDMVYHGNQVALTYDIPMAEVVLDFFDRLKSTSRGYASLDYGFQRFEMSHMVRVDVLLNGDKVDALAIITHRDNSQTRGRQLVEKMKEFIPRQMFDIAIQAAIGNHIIARSTVKQLRKNVLAKCYGGDVSRKKKLLKKQKEGKKRMKQIGNVELPQEAFLAILHVGKD.

The 183-residue stretch at 2 to 184 folds into the tr-type G domain; sequence KHIRNFSIIA…KIVSAIPAPQ (183 aa). Residues 14-19 and 131-134 each bind GTP; these read DHGKST and NKID.

Belongs to the TRAFAC class translation factor GTPase superfamily. Classic translation factor GTPase family. LepA subfamily.

The protein resides in the cell inner membrane. The enzyme catalyses GTP + H2O = GDP + phosphate + H(+). In terms of biological role, required for accurate and efficient protein synthesis under certain stress conditions. May act as a fidelity factor of the translation reaction, by catalyzing a one-codon backward translocation of tRNAs on improperly translocated ribosomes. Back-translocation proceeds from a post-translocation (POST) complex to a pre-translocation (PRE) complex, thus giving elongation factor G a second chance to translocate the tRNAs correctly. Binds to ribosomes in a GTP-dependent manner. This Vibrio cholerae serotype O1 (strain ATCC 39541 / Classical Ogawa 395 / O395) protein is Elongation factor 4.